Reading from the N-terminus, the 118-residue chain is Large ribosomal subunit protein uL22c (118 aa).

This sequence belongs to the universal ribosomal protein uL22 family. Part of the 50S ribosomal subunit.

The protein localises to the plastid. It is found in the chloroplast. Its function is as follows. This protein binds specifically to 23S rRNA. In terms of biological role, the globular domain of the protein is located near the polypeptide exit tunnel on the outside of the subunit, while an extended beta-hairpin is found that lines the wall of the exit tunnel in the center of the 70S ribosome. The sequence is that of Large ribosomal subunit protein uL22c (rpl22) from Physcomitrium patens (Spreading-leaved earth moss).